The following is a 403-amino-acid chain: Flavohemoprotein (403 aa).

In terms of domain architecture, Globin spans 1 to 138 (MLTPEQKAIV…LADLMIGIEK (138 aa)). A heme b-binding site is contributed by histidine 85. Residues tyrosine 95 and glutamate 137 each act as charge relay system in the active site. The reductase stretch occupies residues 149-403 (GGWRDFRPFR…SQSFAPVILG (255 aa)). The FAD-binding FR-type domain maps to 152–257 (RDFRPFRVAR…HVPAGDFVLQ (106 aa)). FAD is bound by residues tyrosine 190 and 206 to 209 (RQYS). 269 to 274 (GVGITP) contributes to the NADP(+) binding site. Residue 390 to 393 (TFGP) coordinates FAD.

It belongs to the globin family. Two-domain flavohemoproteins subfamily. This sequence in the C-terminal section; belongs to the flavoprotein pyridine nucleotide cytochrome reductase family. The cofactor is heme b. FAD serves as cofactor.

It catalyses the reaction 2 nitric oxide + NADPH + 2 O2 = 2 nitrate + NADP(+) + H(+). The catalysed reaction is 2 nitric oxide + NADH + 2 O2 = 2 nitrate + NAD(+) + H(+). This Deinococcus radiodurans (strain ATCC 13939 / DSM 20539 / JCM 16871 / CCUG 27074 / LMG 4051 / NBRC 15346 / NCIMB 9279 / VKM B-1422 / R1) protein is Flavohemoprotein.